The chain runs to 315 residues: 4-hydroxy-3-methylbut-2-enyl diphosphate reductase (315 aa).

Position 12 (C12) interacts with [4Fe-4S] cluster. H41 and H74 together coordinate (2E)-4-hydroxy-3-methylbut-2-enyl diphosphate. H41 and H74 together coordinate dimethylallyl diphosphate. Isopentenyl diphosphate contacts are provided by H41 and H74. C96 provides a ligand contact to [4Fe-4S] cluster. H124 contributes to the (2E)-4-hydroxy-3-methylbut-2-enyl diphosphate binding site. Residue H124 coordinates dimethylallyl diphosphate. Position 124 (H124) interacts with isopentenyl diphosphate. The Proton donor role is filled by E126. T168 is a binding site for (2E)-4-hydroxy-3-methylbut-2-enyl diphosphate. C198 is a [4Fe-4S] cluster binding site. Residues S226, S227, N228, and S270 each coordinate (2E)-4-hydroxy-3-methylbut-2-enyl diphosphate. Dimethylallyl diphosphate is bound by residues S226, S227, N228, and S270. Positions 226, 227, 228, and 270 each coordinate isopentenyl diphosphate.

It belongs to the IspH family. The cofactor is [4Fe-4S] cluster.

It carries out the reaction isopentenyl diphosphate + 2 oxidized [2Fe-2S]-[ferredoxin] + H2O = (2E)-4-hydroxy-3-methylbut-2-enyl diphosphate + 2 reduced [2Fe-2S]-[ferredoxin] + 2 H(+). The enzyme catalyses dimethylallyl diphosphate + 2 oxidized [2Fe-2S]-[ferredoxin] + H2O = (2E)-4-hydroxy-3-methylbut-2-enyl diphosphate + 2 reduced [2Fe-2S]-[ferredoxin] + 2 H(+). Its pathway is isoprenoid biosynthesis; dimethylallyl diphosphate biosynthesis; dimethylallyl diphosphate from (2E)-4-hydroxy-3-methylbutenyl diphosphate: step 1/1. The protein operates within isoprenoid biosynthesis; isopentenyl diphosphate biosynthesis via DXP pathway; isopentenyl diphosphate from 1-deoxy-D-xylulose 5-phosphate: step 6/6. In terms of biological role, catalyzes the conversion of 1-hydroxy-2-methyl-2-(E)-butenyl 4-diphosphate (HMBPP) into a mixture of isopentenyl diphosphate (IPP) and dimethylallyl diphosphate (DMAPP). Acts in the terminal step of the DOXP/MEP pathway for isoprenoid precursor biosynthesis. The chain is 4-hydroxy-3-methylbut-2-enyl diphosphate reductase from Pseudomonas fluorescens (strain ATCC BAA-477 / NRRL B-23932 / Pf-5).